The sequence spans 326 residues: Probable sodium/potassium-transporting ATPase subunit beta-3 (326 aa).

The Cytoplasmic portion of the chain corresponds to 1–59 (MMSSRTRKIYLFVFMFISTSLQLMNGEAKAEPETFRQFLYNKQKGTVLGRTGTSWCQIT). The helical; Signal-anchor for type II membrane protein transmembrane segment at 60–80 (VFYIIFYIFLSAFFIGCLAIF) threads the bilayer. Residues 81 to 326 (LKTLDPKVPR…DKKPVAAPAA (246 aa)) lie on the Lumenal side of the membrane. N-linked (GlcNAc...) asparagine glycosylation is found at asparagine 144 and asparagine 147. A disulfide bridge links cysteine 234 with cysteine 291.

This sequence belongs to the X(+)/potassium ATPases subunit beta family. As to quaternary structure, the sodium/potassium-transporting ATPase is composed of a catalytic alpha subunit, an auxiliary non-catalytic beta subunit and an additional regulatory subunit.

The protein resides in the cell membrane. Functionally, this is the non-catalytic component of the active enzyme, which catalyzes the hydrolysis of ATP coupled with the exchange of Na(+) and K(+) ions across the plasma membrane. The beta subunit regulates, through assembly of alpha/beta heterodimers, the number of sodium pumps transported to the plasma membrane. Implicated in genomic response to various soil bacteria that affects fitness, lifespan and brood size. The protein is Probable sodium/potassium-transporting ATPase subunit beta-3 (nkb-3) of Caenorhabditis briggsae.